A 79-amino-acid polypeptide reads, in one-letter code: D-alanyl carrier protein (79 aa).

Positions 1–77 (MDVKAEVIEI…KIVEGVTELR (77 aa)) constitute a Carrier domain. Position 35 is an O-(pantetheine 4'-phosphoryl)serine (Ser35).

It belongs to the DltC family. In terms of processing, 4'-phosphopantetheine is transferred from CoA to a specific serine of apo-DCP.

The protein localises to the cytoplasm. The protein operates within cell wall biogenesis; lipoteichoic acid biosynthesis. In terms of biological role, carrier protein involved in the D-alanylation of lipoteichoic acid (LTA). The loading of thioester-linked D-alanine onto DltC is catalyzed by D-alanine--D-alanyl carrier protein ligase DltA. The DltC-carried D-alanyl group is further transferred to cell membrane phosphatidylglycerol (PG) by forming an ester bond, probably catalyzed by DltD. D-alanylation of LTA plays an important role in modulating the properties of the cell wall in Gram-positive bacteria, influencing the net charge of the cell wall. The protein is D-alanyl carrier protein of Streptococcus thermophilus (strain CNRZ 1066).